A 229-amino-acid chain; its full sequence is Heptaprenylglyceryl phosphate synthase (229 aa).

Sn-glycerol 1-phosphate is bound at residue Lys12. Residues Asp14 and Ser40 each coordinate Mg(2+). Residues 159–164, Gly189, and 209–210 each bind sn-glycerol 1-phosphate; these read YLEYSG and GN.

This sequence belongs to the GGGP/HepGP synthase family. Group I subfamily. As to quaternary structure, homodimer. The cofactor is Mg(2+).

It catalyses the reaction sn-glycerol 1-phosphate + all-trans-heptaprenyl diphosphate = 3-heptaprenyl-sn-glycero-1-phosphate + diphosphate. Its pathway is membrane lipid metabolism; glycerophospholipid metabolism. Functionally, prenyltransferase that catalyzes in vivo the transfer of the heptaprenyl moiety of heptaprenyl pyrophosphate (HepPP; 35 carbon atoms) to the C3 hydroxyl of sn-glycerol-1-phosphate (G1P), producing heptaprenylglyceryl phosphate (HepGP). This reaction is an ether-bond-formation step in the biosynthesis of archaea-type G1P-based membrane lipids found in Bacillales. This is Heptaprenylglyceryl phosphate synthase from Bacillus cereus (strain ZK / E33L).